A 60-amino-acid chain; its full sequence is Single-pass membrane and coiled-coil domain-containing protein 4 homolog (60 aa).

The tract at residues 1–22 (MRKLRGGQTRETRKQKQERREE) is disordered. Positions 8 to 22 (QTRETRKQKQERREE) are enriched in basic and acidic residues. Residues 8-34 (QTRETRKQKQERREENQKIQQQLKTIV) are a coiled coil. A helical membrane pass occupies residues 30-50 (LKTIVLPICGVVFLCIVAYVF).

This sequence belongs to the SMCO4 family.

It is found in the membrane. This chain is Single-pass membrane and coiled-coil domain-containing protein 4 homolog, found in Culex quinquefasciatus (Southern house mosquito).